Reading from the N-terminus, the 87-residue chain is Small ribosomal subunit protein bS20 (87 aa).

Residues 1–11 show a composition bias toward basic residues; sequence MANIKSAKKRA. The interval 1–26 is disordered; it reads MANIKSAKKRAVQSEKRRQHNASQRS.

Belongs to the bacterial ribosomal protein bS20 family.

Functionally, binds directly to 16S ribosomal RNA. This Actinobacillus pleuropneumoniae serotype 5b (strain L20) protein is Small ribosomal subunit protein bS20.